The following is a 309-amino-acid chain: MSEDRDLLAVGHTAFDYIIHLDEFPEPNTSTAIKRMRNLHGGAAANVALVGSRLGLRTSLVSAVGGDFEGSEYRELLESSGIDIESMILVADESTPTAFVMTDSDHNQISYFYWGAARYFKDAETPADAIKSARAVHLATGDPSFNCRCGEFARSLGKIISFDPGQDLHMYSRSQLERAVGVCDILFGNHHEIDRICSKLSVDIHGLREMGPGVVVKTYGKEGSIIYSDDVIKIDAIPREAVDPTGAGDSYRAGFMRAYLRGADLKTCGRFASAVASFIVEDEGTQTNIPDTGEAVKRFTAQWGYEPPI.

Asp16, Gly42, and Asn46 together coordinate substrate. Gln108 is a binding site for ATP. Substrate-binding positions include Ser110 to Phe112 and Gln166. Residues Asn189 and Lys217–Gly223 each bind ATP. Position 249 (Asp249) interacts with substrate. Asp249 (proton acceptor) is an active-site residue.

This sequence belongs to the carbohydrate kinase PfkB family. Homodimer. Mg(2+) serves as cofactor.

Its function is as follows. Catalyzes the phosphorylation of a wide range of nucleosides to yield nucleoside monophosphates, using ATP, ITP or GTP as phosphate donor. This is Nucleoside kinase from Methanothermobacter thermautotrophicus (strain ATCC 29096 / DSM 1053 / JCM 10044 / NBRC 100330 / Delta H) (Methanobacterium thermoautotrophicum).